The chain runs to 443 residues: Putative F-box/FBD/LRR-repeat protein At3g49030 (443 aa).

The 49-residue stretch at 20-68 (EDRISELPEDLLLQILSDIPTENVIATSVLSKRWRSLWKMVPNLTFDFT) folds into the F-box domain. 6 LRR repeats span residues 74–100 (HQTF…QLNF), 152–179 (ILEI…RLYE), 180–205 (VHFK…SVHR), 218–252 (VPSL…NIVG), 272–297 (ISDV…SLES), and 320–345 (KERE…KLTG). An FBD domain is found at 357–408 (NWNPPKCVPECLLFHLEKFLWTGYEWQRGDEKEVATYILENARLLKKATFST).

The sequence is that of Putative F-box/FBD/LRR-repeat protein At3g49030 from Arabidopsis thaliana (Mouse-ear cress).